The following is a 118-amino-acid chain: Cysteine--tRNA ligase (118 aa).

Position 28 (Cys28) interacts with Zn(2+). A 'HIGH' region motif is present at residues 30–40 (PTVYNYIHIGN).

It belongs to the class-I aminoacyl-tRNA synthetase family. As to quaternary structure, monomer. It depends on Zn(2+) as a cofactor.

Its subcellular location is the cytoplasm. The catalysed reaction is tRNA(Cys) + L-cysteine + ATP = L-cysteinyl-tRNA(Cys) + AMP + diphosphate. The protein is Cysteine--tRNA ligase (cysS) of Staphylococcus xylosus.